The sequence spans 485 residues: NADH-quinone oxidoreductase subunit N (485 aa).

The next 14 helical transmembrane spans lie at L8–I28, F35–V55, G71–A91, F105–L125, S127–F147, Y159–A179, L203–F223, P235–M255, V271–Q291, L297–Q317, V326–L346, A373–I393, W408–V430, and I455–I475.

The protein belongs to the complex I subunit 2 family. NDH-1 is composed of 13 different subunits. Subunits NuoA, H, J, K, L, M, N constitute the membrane sector of the complex.

It localises to the cell inner membrane. The catalysed reaction is a quinone + NADH + 5 H(+)(in) = a quinol + NAD(+) + 4 H(+)(out). Functionally, NDH-1 shuttles electrons from NADH, via FMN and iron-sulfur (Fe-S) centers, to quinones in the respiratory chain. The immediate electron acceptor for the enzyme in this species is believed to be ubiquinone. Couples the redox reaction to proton translocation (for every two electrons transferred, four hydrogen ions are translocated across the cytoplasmic membrane), and thus conserves the redox energy in a proton gradient. The protein is NADH-quinone oxidoreductase subunit N of Shigella flexneri.